Consider the following 526-residue polypeptide: Bifunctional purine biosynthesis protein PurH (526 aa).

The MGS-like domain occupies 1–148 (MQRPIIIRRA…KNYSNVVVVV (148 aa)).

The protein belongs to the PurH family.

It catalyses the reaction (6R)-10-formyltetrahydrofolate + 5-amino-1-(5-phospho-beta-D-ribosyl)imidazole-4-carboxamide = 5-formamido-1-(5-phospho-D-ribosyl)imidazole-4-carboxamide + (6S)-5,6,7,8-tetrahydrofolate. The enzyme catalyses IMP + H2O = 5-formamido-1-(5-phospho-D-ribosyl)imidazole-4-carboxamide. Its pathway is purine metabolism; IMP biosynthesis via de novo pathway; 5-formamido-1-(5-phospho-D-ribosyl)imidazole-4-carboxamide from 5-amino-1-(5-phospho-D-ribosyl)imidazole-4-carboxamide (10-formyl THF route): step 1/1. It functions in the pathway purine metabolism; IMP biosynthesis via de novo pathway; IMP from 5-formamido-1-(5-phospho-D-ribosyl)imidazole-4-carboxamide: step 1/1. The chain is Bifunctional purine biosynthesis protein PurH from Baumannia cicadellinicola subsp. Homalodisca coagulata.